The primary structure comprises 304 residues: UDP-3-O-acyl-N-acetylglucosamine deacetylase (304 aa).

The Zn(2+) site is built by histidine 79, histidine 238, and aspartate 242. Histidine 265 serves as the catalytic Proton donor.

Belongs to the LpxC family. It depends on Zn(2+) as a cofactor.

The enzyme catalyses a UDP-3-O-[(3R)-3-hydroxyacyl]-N-acetyl-alpha-D-glucosamine + H2O = a UDP-3-O-[(3R)-3-hydroxyacyl]-alpha-D-glucosamine + acetate. It functions in the pathway glycolipid biosynthesis; lipid IV(A) biosynthesis; lipid IV(A) from (3R)-3-hydroxytetradecanoyl-[acyl-carrier-protein] and UDP-N-acetyl-alpha-D-glucosamine: step 2/6. In terms of biological role, catalyzes the hydrolysis of UDP-3-O-myristoyl-N-acetylglucosamine to form UDP-3-O-myristoylglucosamine and acetate, the committed step in lipid A biosynthesis. This chain is UDP-3-O-acyl-N-acetylglucosamine deacetylase, found in Chromobacterium violaceum (strain ATCC 12472 / DSM 30191 / JCM 1249 / CCUG 213 / NBRC 12614 / NCIMB 9131 / NCTC 9757 / MK).